The chain runs to 282 residues: uncharacterized protein (282 aa).

The HTH rpiR-type domain maps to 1-77; the sequence is MNGLLRIRQR…LALSEALASQ (77 aa). Residues 37–56 constitute a DNA-binding region (H-T-H motif); it reads SQQLANEAGVSQSSVVKFAQ. Residues 125 to 265 enclose the SIS domain; it reads CVTMLRSARR…FIALIQQDLE (141 aa).

This is an uncharacterized protein from Escherichia coli (strain K12).